A 247-amino-acid chain; its full sequence is Segregation and condensation protein A (247 aa).

The protein belongs to the ScpA family. As to quaternary structure, component of a cohesin-like complex composed of ScpA, ScpB and the Smc homodimer, in which ScpA and ScpB bind to the head domain of Smc. The presence of the three proteins is required for the association of the complex with DNA.

The protein resides in the cytoplasm. Participates in chromosomal partition during cell division. May act via the formation of a condensin-like complex containing Smc and ScpB that pull DNA away from mid-cell into both cell halves. This chain is Segregation and condensation protein A, found in Bacillus cereus (strain G9842).